Consider the following 173-residue polypeptide: MSLNDLNTLPGVTAQADPATAQFVFNHTMLRVKDIEKSLDFYTRVLGFKLVDKRDFVEAKFSLYFLALVDPATIPADDDARHQWMKSIPGVLELTHNHGTERDADFAYHHGNTDPRGFGHICVSVPDVVAACERFEALQVPFQKRLSDGRMNHLAFIKDPDGYWVEVIQPTPL.

The 147-residue stretch at 24–170 (VFNHTMLRVK…DGYWVEVIQP (147 aa)) folds into the VOC domain. His-27 is a binding site for Ni(2+). Arg-31 contacts substrate. Glu-93 contacts Ni(2+). Asn-97, Arg-116, and His-120 together coordinate substrate. Residues His-120 and Glu-166 each coordinate Ni(2+). Residue Glu-166 is the Proton donor/acceptor of the active site.

Belongs to the glyoxalase I family. In terms of assembly, monomer. Ni(2+) is required as a cofactor. The cofactor is Zn(2+).

It carries out the reaction (R)-S-lactoylglutathione = methylglyoxal + glutathione. It participates in secondary metabolite metabolism; methylglyoxal degradation; (R)-lactate from methylglyoxal: step 1/2. Its function is as follows. Catalyzes the conversion of hemimercaptal, formed from methylglyoxal and glutathione, to S-lactoylglutathione. The polypeptide is Lactoylglutathione lyase (gloA) (Pseudomonas putida (Arthrobacter siderocapsulatus)).